Consider the following 56-residue polypeptide: Small ribosomal subunit protein uS14B (56 aa).

The Zn(2+) site is built by cysteine 21 and cysteine 24. Phosphoserine is present on serine 25. Cysteine 39 and cysteine 42 together coordinate Zn(2+).

It belongs to the universal ribosomal protein uS14 family. In terms of assembly, component of the small ribosomal subunit (SSU). Mature yeast ribosomes consist of a small (40S) and a large (60S) subunit. The 40S small subunit contains 1 molecule of ribosomal RNA (18S rRNA) and 33 different proteins (encoded by 57 genes). The large 60S subunit contains 3 rRNA molecules (25S, 5.8S and 5S rRNA) and 46 different proteins (encoded by 81 genes). The cofactor is Zn(2+).

The protein localises to the cytoplasm. Its function is as follows. Component of the ribosome, a large ribonucleoprotein complex responsible for the synthesis of proteins in the cell. The small ribosomal subunit (SSU) binds messenger RNAs (mRNAs) and translates the encoded message by selecting cognate aminoacyl-transfer RNA (tRNA) molecules. The large subunit (LSU) contains the ribosomal catalytic site termed the peptidyl transferase center (PTC), which catalyzes the formation of peptide bonds, thereby polymerizing the amino acids delivered by tRNAs into a polypeptide chain. The nascent polypeptides leave the ribosome through a tunnel in the LSU and interact with protein factors that function in enzymatic processing, targeting, and the membrane insertion of nascent chains at the exit of the ribosomal tunnel. The chain is Small ribosomal subunit protein uS14B from Saccharomyces cerevisiae (strain ATCC 204508 / S288c) (Baker's yeast).